The primary structure comprises 455 residues: Gamma-glutamyl phosphate reductase (455 aa).

The protein belongs to the gamma-glutamyl phosphate reductase family.

The protein localises to the cytoplasm. It carries out the reaction L-glutamate 5-semialdehyde + phosphate + NADP(+) = L-glutamyl 5-phosphate + NADPH + H(+). It functions in the pathway amino-acid biosynthesis; L-proline biosynthesis; L-glutamate 5-semialdehyde from L-glutamate: step 2/2. Catalyzes the NADPH-dependent reduction of L-glutamate 5-phosphate into L-glutamate 5-semialdehyde and phosphate. The product spontaneously undergoes cyclization to form 1-pyrroline-5-carboxylate. The sequence is that of Gamma-glutamyl phosphate reductase from Synechococcus sp. (strain JA-3-3Ab) (Cyanobacteria bacterium Yellowstone A-Prime).